Consider the following 362-residue polypeptide: Serine/threonine-protein kinase SRK2D (362 aa).

A Protein kinase domain is found at 23–279; the sequence is YDFVKDIGSG…IPEITSDKWF (257 aa). Residues 29–37 and lysine 52 each bind ATP; that span reads IGSGNFGVA. Aspartate 142 serves as the catalytic Proton acceptor.

Belongs to the protein kinase superfamily. Ser/Thr protein kinase family. As to quaternary structure, interacts with ABI1. Interacts with I-2, TOPP1 and TOPP2. Interacts with FREE1 (via C-terminus). As to expression, expressed in seeds, seedlings, roots (especially in tips), stems, leaves, shoots, flowers and siliques.

The enzyme catalyses L-seryl-[protein] + ATP = O-phospho-L-seryl-[protein] + ADP + H(+). It catalyses the reaction L-threonyl-[protein] + ATP = O-phospho-L-threonyl-[protein] + ADP + H(+). Functionally, together with SRK2I, key component and activator of the abscisic acid (ABA) signaling pathway that regulates numerous ABA responses, such as seed germination, Pro accumulation, root growth inhibition, dormancy and seedling growth, and, to a lesser extent, stomatal closure. In response to ABA, phosphorylates the ESCRT-I complex component FREE1, which is required for ABA-induced FREE1 nuclear import. In Arabidopsis thaliana (Mouse-ear cress), this protein is Serine/threonine-protein kinase SRK2D (SRK2D).